The following is a 265-amino-acid chain: Undecaprenyl-diphosphatase (265 aa).

A run of 8 helical transmembrane segments spans residues 7–27, 45–65, 86–106, 108–128, 145–165, 186–206, 214–234, and 245–265; these read IIVS…PISS, TKIL…YFFH, LHII…YKKI, LLFN…FLLI, ISLL…YPGF, IEFS…YDFI, ILDL…SILC, and TSLI…YFIN.

Belongs to the UppP family.

It localises to the cell membrane. It carries out the reaction di-trans,octa-cis-undecaprenyl diphosphate + H2O = di-trans,octa-cis-undecaprenyl phosphate + phosphate + H(+). Its function is as follows. Catalyzes the dephosphorylation of undecaprenyl diphosphate (UPP). Confers resistance to bacitracin. This Buchnera aphidicola subsp. Acyrthosiphon pisum (strain Tuc7) protein is Undecaprenyl-diphosphatase.